The chain runs to 57 residues: UPF0391 membrane protein RPC_3278 (57 aa).

2 helical membrane-spanning segments follow: residues 4–24 and 30–50; these read WVIT…GGIA and IAKI…VVGL.

It belongs to the UPF0391 family.

It is found in the cell membrane. This is UPF0391 membrane protein RPC_3278 from Rhodopseudomonas palustris (strain BisB18).